We begin with the raw amino-acid sequence, 545 residues long: T-complex protein 1 subunit gamma (545 aa).

Residue methionine 1 is modified to N-acetylmethionine. Positions 1 to 24 (MMGHRPVLVLSQNTKRESGRKVQS) are disordered. Position 11 is a phosphoserine (serine 11). Lysine 15 participates in a covalent cross-link: Glycyl lysine isopeptide (Lys-Gly) (interchain with G-Cter in SUMO2). Glycine 42 contributes to the ADP binding site. Residue glycine 42 coordinates ATP. Aspartate 93 is a Mg(2+) binding site. The ADP site is built by glycine 94, threonine 95, threonine 96, serine 97, threonine 162, and lysine 163. ATP-binding residues include glycine 94, threonine 95, and threonine 96. A Phosphoserine modification is found at serine 170. The residue at position 222 (lysine 222) is an N6-acetyllysine. Residues serine 243 and serine 244 each carry the phosphoserine modification. Tyrosine 247 carries the post-translational modification Phosphotyrosine. Residues lysine 248 and lysine 249 each participate in a glycyl lysine isopeptide (Lys-Gly) (interchain with G-Cter in SUMO2) cross-link. At serine 252 the chain carries Phosphoserine. Cysteine 366 and cysteine 372 are joined by a disulfide. Lysine 381 participates in a covalent cross-link: Glycyl lysine isopeptide (Lys-Gly) (interchain with G-Cter in SUMO2). Glycine 411 is a binding site for ADP. Residue glycine 411 coordinates ATP. Threonine 430 and threonine 459 each carry phosphothreonine. ADP-binding residues include glycine 482, glutamate 483, glutamate 497, and lysine 502. Glycine 482 is an ATP binding site. Glutamate 497 is an ATP binding site. The segment at 526–545 (HKKKGDDQSRQGGAPDAGQE) is disordered.

The protein belongs to the TCP-1 chaperonin family. Component of the chaperonin-containing T-complex (TRiC), a hexadecamer composed of two identical back-to-back stacked rings enclosing a protein folding chamber. Each ring is made up of eight different subunits: TCP1/CCT1, CCT2, CCT3, CCT4, CCT5, CCT6A/CCT6, CCT7, CCT8. Interacts with PACRG. Interacts with DNAAF4. Interacts with DLEC1.

The protein localises to the cytoplasm. The enzyme catalyses ATP + H2O = ADP + phosphate + H(+). Its function is as follows. Component of the chaperonin-containing T-complex (TRiC), a molecular chaperone complex that assists the folding of actin, tubulin and other proteins upon ATP hydrolysis. The TRiC complex mediates the folding of WRAP53/TCAB1, thereby regulating telomere maintenance. As part of the TRiC complex may play a role in the assembly of BBSome, a complex involved in ciliogenesis regulating transports vesicles to the cilia. The sequence is that of T-complex protein 1 subunit gamma (CCT3) from Homo sapiens (Human).